A 236-amino-acid chain; its full sequence is Proteasome subunit beta type-1 (236 aa).

Belongs to the peptidase T1B family. The 26S proteasome consists of a 20S proteasome core and two 19S regulatory subunits. The 20S proteasome core is composed of 28 subunits that are arranged in four stacked rings, resulting in a barrel-shaped structure. The two end rings are each formed by seven alpha subunits, and the two central rings are each formed by seven beta subunits. The catalytic chamber with the active sites is on the inside of the barrel.

The protein resides in the cytoplasm. It is found in the nucleus. Non-catalytic component of the proteasome, a multicatalytic proteinase complex which is characterized by its ability to cleave peptides with Arg, Phe, Tyr, Leu, and Glu adjacent to the leaving group at neutral or slightly basic pH. The proteasome has an ATP-dependent proteolytic activity. The protein is Proteasome subunit beta type-1 (psmB1) of Dictyostelium discoideum (Social amoeba).